The following is a 584-amino-acid chain: Tyrosine-protein kinase Dnt (584 aa).

Residues 1 to 40 (MESVNKCGKSASTRNCTVKMSRKMWVLSLLALAALQLHSG) form the signal peptide. Over 41–208 (SEVAAHLNVF…LETVMLPPTG (168 aa)) the chain is Extracellular. The region spanning 49–180 (VFLNPVEVMR…HLVFRRKKIC (132 aa)) is the WIF domain. N-linked (GlcNAc...) asparagine glycosylation is found at asparagine 124, asparagine 163, asparagine 168, and asparagine 183. Residues 209 to 229 (LITLVVGVSVAMGSVCLLLMI) traverse the membrane as a helical segment. The Cytoplasmic segment spans residues 230–584 (AYCVKGAANK…EFYSQITRYV (355 aa)). A disordered region spans residues 241-261 (QHHQHGGQPMRTSSFQRLNTH). Polar residues predominate over residues 250 to 261 (MRTSSFQRLNTH). The Protein kinase domain occupies 317–577 (VRLSSLLQEG…QLQSCLSEFY (261 aa)). Residues 323 to 331 (LQEGTFGRV) and lysine 345 each bind ATP. The active-site Proton acceptor is aspartate 442. Tyrosine 472 carries the phosphotyrosine; by autocatalysis modification.

This sequence belongs to the protein kinase superfamily. Tyr protein kinase family. As to expression, expressed in dynamic domains in the embryonic epidermis, many of which border on sites of epithelial invagination into the embryo interior, including ventral furrow, cephalic furrow, fore- and hindgut, optic lobe and tracheal pits. Later in embryogenesis, expression is seen in imaginal tissues.

The protein resides in the cell membrane. It carries out the reaction L-tyrosyl-[protein] + ATP = O-phospho-L-tyrosyl-[protein] + ADP + H(+). In terms of biological role, may play an essential role in neuronal pathway recognition and ventral muscle attachment site selection. The chain is Tyrosine-protein kinase Dnt (dnt) from Drosophila melanogaster (Fruit fly).